A 277-amino-acid chain; its full sequence is Purine nucleoside phosphorylase 2 (277 aa).

Phosphate is bound by residues His-65, 85–87 (RGH), and Ala-117. Position 197 (Glu-197) interacts with a purine D-ribonucleoside. Ser-216 lines the phosphate pocket. Asn-239 is an a purine D-ribonucleoside binding site.

This sequence belongs to the PNP/MTAP phosphorylase family. Hexamer. Dimer of trimers.

It carries out the reaction a purine D-ribonucleoside + phosphate = a purine nucleobase + alpha-D-ribose 1-phosphate. It participates in purine metabolism; xanthosine degradation. It functions in the pathway purine metabolism; purine nucleoside salvage. Its activity is regulated as follows. Rapidly inactivated by p-chloromercuriphenylsulfonic acid (p-CMB). Dithiothreitol incubation restores the activity. Its function is as follows. The purine nucleoside phosphorylases catalyze the phosphorolytic breakdown of the N-glycosidic bond in the beta-(deoxy)ribonucleoside molecules, with the formation of the corresponding free purine bases and pentose-1-phosphate. This protein can degrade all purine nucleosides including xanthosine, inosine and guanosine, but cannot cleave adenosine, deoxyadenosine or hypoxanthine arabinoside. Has a preference for the neutral over the monoanionic form of xanthosine. This is Purine nucleoside phosphorylase 2 (xapA) from Escherichia coli (strain K12).